Here is a 102-residue protein sequence, read N- to C-terminus: Small ribosomal subunit protein uS10 (102 aa).

The protein belongs to the universal ribosomal protein uS10 family. As to quaternary structure, part of the 30S ribosomal subunit.

Involved in the binding of tRNA to the ribosomes. The protein is Small ribosomal subunit protein uS10 of Desulforamulus reducens (strain ATCC BAA-1160 / DSM 100696 / MI-1) (Desulfotomaculum reducens).